The primary structure comprises 125 residues: Small ribosomal subunit protein uS13 (125 aa).

The interval 97-125 (PVRGQKTRSNARTRKGPRPSRIKTKKKSS) is disordered. Over residues 101-125 (QKTRSNARTRKGPRPSRIKTKKKSS) the composition is skewed to basic residues.

The protein belongs to the universal ribosomal protein uS13 family. As to quaternary structure, part of the 30S ribosomal subunit. Forms a loose heterodimer with protein S19. Forms two bridges to the 50S subunit in the 70S ribosome.

In terms of biological role, located at the top of the head of the 30S subunit, it contacts several helices of the 16S rRNA. In the 70S ribosome it contacts the 23S rRNA (bridge B1a) and protein L5 of the 50S subunit (bridge B1b), connecting the 2 subunits; these bridges are implicated in subunit movement. Contacts the tRNAs in the A and P-sites. In Thermotoga maritima (strain ATCC 43589 / DSM 3109 / JCM 10099 / NBRC 100826 / MSB8), this protein is Small ribosomal subunit protein uS13.